A 552-amino-acid chain; its full sequence is Phosphoglucomutase (552 aa).

Serine 135 (phosphoserine intermediate) is an active-site residue. Residues serine 135, aspartate 289, aspartate 291, and aspartate 293 each coordinate Mg(2+).

It belongs to the phosphohexose mutase family. The cofactor is Mg(2+).

The enzyme catalyses alpha-D-glucose 1-phosphate = alpha-D-glucose 6-phosphate. The protein operates within glycolipid metabolism; diglucosyl-diacylglycerol biosynthesis. In terms of biological role, catalyzes the interconversion between glucose-6-phosphate and alpha-glucose-1-phosphate. This is the first step in the biosynthesis of diglucosyl-diacylglycerol (Glc2-DAG), i.e. a glycolipid found in the membrane, which is also used as a membrane anchor for lipoteichoic acid (LTA). The sequence is that of Phosphoglucomutase (pgcA) from Staphylococcus saprophyticus subsp. saprophyticus (strain ATCC 15305 / DSM 20229 / NCIMB 8711 / NCTC 7292 / S-41).